A 146-amino-acid chain; its full sequence is Hemoglobin subunit beta-1 (146 aa).

One can recognise a Globin domain in the interval 2 to 146; sequence EWTDKERAII…VVSALGKQYH (145 aa). Heme b-binding residues include His-63 and His-92.

This sequence belongs to the globin family. In terms of assembly, hb 1 is a heterotetramer of two alpha-1 and two beta-1 chains. As to expression, red blood cells.

Its function is as follows. Involved in oxygen transport from gills to the various peripheral tissues. This chain is Hemoglobin subunit beta-1 (hbb1), found in Gobionotothen gibberifrons (Humped rockcod).